The following is a 517-amino-acid chain: Ladinin-1 (517 aa).

The disordered stretch occupies residues 1 to 401 (MAVSRKDWSA…SASMKLPDNT (401 aa)). Ser-38 is subject to Phosphoserine. Positions 48–58 (LSQNGDRQASA) are enriched in polar residues. Ser-64, Ser-78, Ser-121, and Ser-123 each carry phosphoserine. Residues 120-131 (NSLSPVQATQKP) are compositionally biased toward polar residues. Basic and acidic residues-rich tracts occupy residues 134–151 (SKKELEIPPRRRLSREQR) and 161–174 (LVGREPEERKKGVP). SEK repeat units lie at residues 203–205 (SEK), 209–211 (SEK), 215–217 (SEK), 221–223 (SEK), 227–229 (SEK), 239–241 (SEK), 257–259 (SEK), and 269–271 (SEK). The segment at 203–271 (SEKVLASEKT…IFEKALASEK (69 aa)) is 8 X SEK repeats. Positions 219-233 (AVSEKRNSSEKKSVL) are enriched in basic and acidic residues. Phosphoserine occurs at positions 347, 356, and 394. Polar residues predominate over residues 355-373 (SSPTQRTYSSSLKRSSPRT). Arg-424 bears the Omega-N-methylarginine mark. A disordered region spans residues 481–517 (RTQESGDQDPQEAQKASSATERTQWGQKSDSSLDAEV). Phosphoserine is present on Ser-485. A compositionally biased stretch (polar residues) spans 494 to 517 (QKASSATERTQWGQKSDSSLDAEV).

It is found in the secreted. The protein resides in the extracellular space. It localises to the extracellular matrix. The protein localises to the basement membrane. In terms of biological role, anchoring filament protein which is a component of the basement membrane zone. The protein is Ladinin-1 (LAD1) of Homo sapiens (Human).